Reading from the N-terminus, the 333-residue chain is Cytochrome f (333 aa).

The N-terminal stretch at 1–44 is a signal peptide; it reads MRNASVTARLTRSVRAIVKTLLIAIATVTFYFSCDLALPQSAAA. Residues Y45, C66, C69, and H70 each contribute to the heme site. The chain crosses the membrane as a helical span at residues 301–318; the sequence is GLIAFVALVMLAQVMLVL.

It belongs to the cytochrome f family. The 4 large subunits of the cytochrome b6-f complex are cytochrome b6, subunit IV (17 kDa polypeptide, PetD), cytochrome f and the Rieske protein, while the 4 small subunits are PetG, PetL, PetM and PetN. The complex functions as a dimer. It depends on heme as a cofactor.

Its subcellular location is the cellular thylakoid membrane. Component of the cytochrome b6-f complex, which mediates electron transfer between photosystem II (PSII) and photosystem I (PSI), cyclic electron flow around PSI, and state transitions. This Desmonostoc sp. (strain PCC 7906) (Nostoc sp. (strain PCC 7906)) protein is Cytochrome f (petA).